Consider the following 462-residue polypeptide: tRNA modification GTPase MnmE (462 aa).

The (6S)-5-formyl-5,6,7,8-tetrahydrofolate site is built by Arg23, Glu86, and Lys125. The TrmE-type G domain occupies 221–384 (GIPVAIVGEP…LKNQLLSFVN (164 aa)). Residue Asn231 coordinates K(+). GTP is bound by residues 231–236 (NVGKST), 250–256 (SEIAGTT), and 275–278 (DTAG). Ser235 contacts Mg(2+). Residues Ser250, Ile252, and Thr255 each coordinate K(+). Residue Thr256 participates in Mg(2+) binding. Lys462 is a binding site for (6S)-5-formyl-5,6,7,8-tetrahydrofolate.

This sequence belongs to the TRAFAC class TrmE-Era-EngA-EngB-Septin-like GTPase superfamily. TrmE GTPase family. Homodimer. Heterotetramer of two MnmE and two MnmG subunits. Requires K(+) as cofactor.

It localises to the cytoplasm. Exhibits a very high intrinsic GTPase hydrolysis rate. Involved in the addition of a carboxymethylaminomethyl (cmnm) group at the wobble position (U34) of certain tRNAs, forming tRNA-cmnm(5)s(2)U34. The polypeptide is tRNA modification GTPase MnmE (Flavobacterium psychrophilum (strain ATCC 49511 / DSM 21280 / CIP 103535 / JIP02/86)).